Consider the following 121-residue polypeptide: Nitrogen fixation nifHD region GlnB-like protein 2 (121 aa).

This sequence belongs to the P(II) protein family.

Functionally, could be involved in the regulation of nitrogen fixation. The sequence is that of Nitrogen fixation nifHD region GlnB-like protein 2 (glnBB) from Methanothermobacter marburgensis (strain ATCC BAA-927 / DSM 2133 / JCM 14651 / NBRC 100331 / OCM 82 / Marburg) (Methanobacterium thermoautotrophicum).